We begin with the raw amino-acid sequence, 117 residues long: Large ribosomal subunit protein eL34 (117 aa).

Ser12 is subject to Phosphoserine. N6-acetyllysine is present on residues Lys36 and Lys43. A Glycyl lysine isopeptide (Lys-Gly) (interchain with G-Cter in SUMO2) cross-link involves residue Lys108.

It belongs to the eukaryotic ribosomal protein eL34 family. As to quaternary structure, component of the large ribosomal subunit.

It localises to the cytoplasm. It is found in the cytosol. The protein resides in the endoplasmic reticulum. In terms of biological role, component of the large ribosomal subunit. The ribosome is a large ribonucleoprotein complex responsible for the synthesis of proteins in the cell. This is Large ribosomal subunit protein eL34 (Rpl34) from Rattus norvegicus (Rat).